The chain runs to 694 residues: Potassium-transporting ATPase ATP-binding subunit (694 aa).

The next 4 membrane-spanning stretches (helical) occupy residues 36-56 (VMFVVATVSVLTTVLFIRDLI), 62-82 (LAFSFQINLWLWFTVLFANFA), 218-238 (IALNILLAGMTLIFVLATATI), and 249-269 (IPIIVLVALFVTLIPTTIGAL). Asp306 serves as the catalytic 4-aspartylphosphate intermediate. ATP contacts are provided by residues Asp343, Glu347, 376–383 (FTAQTRMS), and Lys394. Mg(2+)-binding residues include Asp530 and Asp534. Transmembrane regions (helical) follow at residues 600–620 (FAIIPAMFLALYPQLGVLNVM), 628–648 (AILSAIIFNALIIIALIPLSL), and 666–686 (LVIYGLGGIIVPFIGIKLIDL).

Belongs to the cation transport ATPase (P-type) (TC 3.A.3) family. Type IA subfamily. The system is composed of three essential subunits: KdpA, KdpB and KdpC.

Its subcellular location is the cell inner membrane. The enzyme catalyses K(+)(out) + ATP + H2O = K(+)(in) + ADP + phosphate + H(+). Functionally, part of the high-affinity ATP-driven potassium transport (or Kdp) system, which catalyzes the hydrolysis of ATP coupled with the electrogenic transport of potassium into the cytoplasm. This subunit is responsible for energy coupling to the transport system and for the release of the potassium ions to the cytoplasm. The polypeptide is Potassium-transporting ATPase ATP-binding subunit (Agrobacterium fabrum (strain C58 / ATCC 33970) (Agrobacterium tumefaciens (strain C58))).